Consider the following 167-residue polypeptide: Peptide deformylase (167 aa).

Fe cation-binding residues include cysteine 91 and histidine 133. The active site involves glutamate 134. Histidine 137 lines the Fe cation pocket.

The protein belongs to the polypeptide deformylase family. It depends on Fe(2+) as a cofactor.

The catalysed reaction is N-terminal N-formyl-L-methionyl-[peptide] + H2O = N-terminal L-methionyl-[peptide] + formate. Functionally, removes the formyl group from the N-terminal Met of newly synthesized proteins. Requires at least a dipeptide for an efficient rate of reaction. N-terminal L-methionine is a prerequisite for activity but the enzyme has broad specificity at other positions. The chain is Peptide deformylase from Neisseria gonorrhoeae (strain ATCC 700825 / FA 1090).